A 449-amino-acid chain; its full sequence is CCA-adding enzyme (449 aa).

S57 and R60 together coordinate ATP. S57 and R60 together coordinate CTP. Mg(2+)-binding residues include D69, D71, and D124. The ATP site is built by H147, K167, and Y176. CTP contacts are provided by H147, K167, and Y176.

Belongs to the tRNA nucleotidyltransferase/poly(A) polymerase family. Archaeal CCA-adding enzyme subfamily. In terms of assembly, homodimer. Mg(2+) serves as cofactor.

The enzyme catalyses a tRNA precursor + 2 CTP + ATP = a tRNA with a 3' CCA end + 3 diphosphate. It catalyses the reaction a tRNA with a 3' CCA end + 2 CTP + ATP = a tRNA with a 3' CCACCA end + 3 diphosphate. Its function is as follows. Catalyzes the addition and repair of the essential 3'-terminal CCA sequence in tRNAs without using a nucleic acid template. Adds these three nucleotides in the order of C, C, and A to the tRNA nucleotide-73, using CTP and ATP as substrates and producing inorganic pyrophosphate. tRNA 3'-terminal CCA addition is required both for tRNA processing and repair. Also involved in tRNA surveillance by mediating tandem CCA addition to generate a CCACCA at the 3' terminus of unstable tRNAs. While stable tRNAs receive only 3'-terminal CCA, unstable tRNAs are marked with CCACCA and rapidly degraded. This Methanocaldococcus jannaschii (strain ATCC 43067 / DSM 2661 / JAL-1 / JCM 10045 / NBRC 100440) (Methanococcus jannaschii) protein is CCA-adding enzyme.